The sequence spans 416 residues: MKEIEYVKELSYRAKKASRTLKSLSSFQKNKVLLELANLLEKRKSEILSANEFDLKNGKEKNLPSALMDRLLLNEKRIDSMAFAVREIVSLPDPVGEVTRGLTLPNGLELVTKRVPLGVVMVIYESRPNVTIDVGALSFKSGNACILRGGSEAFHSNEILVKLFHEILNKEGIDTSAITFVDKTDRSFMLPFLQQTPSIDVVVPRGGEGLIKFISEHSMIPVVKHDKGVCNLYIDQDADPAKVIPIVINSKVQRPGVCNATENLILHNGYPFRKELLEALAKEGVELLLDPSALSLYPKGRPVKEEDYQEEFLDLRLSVKTVSSLEEALTFIERTSSGHTEAIITEDLNAAKMFTNSLDSAALFVNCSTRFHDGAEFGLGAEVGISTGKLHVRGPMGLVHLTTTTTYVTGNGQIRN.

Belongs to the gamma-glutamyl phosphate reductase family.

It is found in the cytoplasm. It catalyses the reaction L-glutamate 5-semialdehyde + phosphate + NADP(+) = L-glutamyl 5-phosphate + NADPH + H(+). It functions in the pathway amino-acid biosynthesis; L-proline biosynthesis; L-glutamate 5-semialdehyde from L-glutamate: step 2/2. Catalyzes the NADPH-dependent reduction of L-glutamate 5-phosphate into L-glutamate 5-semialdehyde and phosphate. The product spontaneously undergoes cyclization to form 1-pyrroline-5-carboxylate. The sequence is that of Gamma-glutamyl phosphate reductase from Leptospira borgpetersenii serovar Hardjo-bovis (strain JB197).